A 186-amino-acid polypeptide reads, in one-letter code: ADP-ribosylation factor-like protein 8B (186 aa).

Positions 1–19 (MLALISRLLDWFRSLFWKE) form an intramembrane region, note=Mediates targeting to membranes. Residues 29–35 (QYSGKTT), 71–75 (DIGGQ), and 130–133 (NKRD) contribute to the GTP site. Lys141 participates in a covalent cross-link: Glycyl lysine isopeptide (Lys-Gly) (interchain with G-Cter in ubiquitin).

This sequence belongs to the small GTPase superfamily. Arf family. Interacts with tubulin. Interacts with BORCS5; recruits ARL8B to lysosomes. Interacts with VPS41; the interaction mediates the recruitment of the HOPS complex to lysosomes. Interacts (GTP-bound form) with PLEKHM2 (via RUN domain); the interaction is required to recruit the motor protein kinesin-1 on lysosomes. Interacts (GTP-bound form) with PLEKHM1 (via RUN domain); the interaction is required for PLEKHM1 localization to lysosomes and for ARL8B function in delivery and degradation of endocytic and autophagic cargo in lysosomes. PLEKHM1 and PLEKHM2 compete for interaction with ARL8B. Interacts (GTP-bound form) with RUFY1; the interaction is required for RUFY1 endosomal location. When GTP-bound, interacts with RUFY3 and RUFY4, but not with RUFY1, nor RUFY2. Ubiquitinated at Lys-141 by RNF167, leading to its degradation.

It is found in the late endosome membrane. The protein localises to the lysosome membrane. It localises to the cytoplasm. The protein resides in the cytoskeleton. Its subcellular location is the spindle. It is found in the cell projection. The protein localises to the axon. It localises to the synapse. The protein resides in the cytolytic granule membrane. Its subcellular location is the early endosome membrane. The catalysed reaction is GTP + H2O = GDP + phosphate + H(+). In terms of biological role, small GTPase which cycles between active GTP-bound and inactive GDP-bound states. In its active state, binds to a variety of effector proteins playing a key role in the regulation of lysosomal positioning which is important for nutrient sensing, natural killer cell-mediated cytotoxicity and antigen presentation. Along with its effectors, orchestrates lysosomal transport and fusion. Localizes specifically to lysosomal membranes and mediates anterograde lysosomal motility by recruiting PLEKHM2, which in turn recruits the motor protein kinesin-1 on lysosomes. Required for lysosomal and cytolytic granule exocytosis. Critical factor involved in NK cell-mediated cytotoxicity. Drives the polarization of cytolytic granules and microtubule-organizing centers (MTOCs) toward the immune synapse between effector NK lymphocytes and target cells. In neurons, mediates the anterograde axonal long-range transport of presynaptic lysosome-related vesicles required for presynaptic biogenesis and synaptic function. Also acts as a regulator of endosome to lysosome trafficking pathways of special significance for host defense. Recruits RUFY1 onto early endosomes regulating endosomes to trans-Golgi network proteins retrieval. Regulates cargo trafficking to lysosomes by binding to PLEKHM1 and recruiting the HOPS subunit VPS41, resulting in functional assembly of the HOPS complex on lysosomal membranes. Plays an important role in cargo delivery to lysosomes for antigen presentation and microbial killing. Directs the intersection of CD1d with lipid antigens in lysosomes, and plays a role in intersecting phagosomes with lysosomes to generate phagolysosomes that kill microbes. Involved in the process of MHC II presentation. Regulates the delivery of antigens to lysosomes and the formation of MHC II-peptide complexes through the recruitment of the HOPS complex to lysosomes allowing the fusion of late endosomes to lysosomes. May play a role in chromosome segregation. The protein is ADP-ribosylation factor-like protein 8B (ARL8B) of Pongo abelii (Sumatran orangutan).